The primary structure comprises 309 residues: ATP synthase gamma chain (309 aa).

Belongs to the ATPase gamma chain family. F-type ATPases have 2 components, CF(1) - the catalytic core - and CF(0) - the membrane proton channel. CF(1) has five subunits: alpha(3), beta(3), gamma(1), delta(1), epsilon(1). CF(0) has three main subunits: a, b and c.

The protein localises to the cell membrane. Functionally, produces ATP from ADP in the presence of a proton gradient across the membrane. The gamma chain is believed to be important in regulating ATPase activity and the flow of protons through the CF(0) complex. The sequence is that of ATP synthase gamma chain from Salinispora arenicola (strain CNS-205).